The sequence spans 734 residues: Elongation factor 2 (734 aa).

The region spanning 18-259 (EQIRNIGITA…MVVKYVPNPR (242 aa)) is the tr-type G domain. GTP-binding positions include 27-34 (AHVDHGKT), 93-97 (DTPGH), and 147-150 (NKID). A Diphthamide modification is found at His-600.

The protein belongs to the TRAFAC class translation factor GTPase superfamily. Classic translation factor GTPase family. EF-G/EF-2 subfamily.

The protein resides in the cytoplasm. Its function is as follows. Catalyzes the GTP-dependent ribosomal translocation step during translation elongation. During this step, the ribosome changes from the pre-translocational (PRE) to the post-translocational (POST) state as the newly formed A-site-bound peptidyl-tRNA and P-site-bound deacylated tRNA move to the P and E sites, respectively. Catalyzes the coordinated movement of the two tRNA molecules, the mRNA and conformational changes in the ribosome. This Desulfurococcus mucosus (Desulfurococcus mobilis) protein is Elongation factor 2 (fusA).